A 313-amino-acid chain; its full sequence is uncharacterized protein (313 aa).

Residues 2 to 57 (KLERLLAMVVLLISKKQVQAAELAELFEVSVRTIYRDIETINRAGIPIVTSQGSGG) enclose the HTH deoR-type domain. A DNA-binding region (H-T-H motif) is located at residues 19 to 38 (VQAAELAELFEVSVRTIYRD). Positions 131 to 210 (HTEDQKTLRE…KDLAILHQTF (80 aa)) constitute a WYL domain.

Its subcellular location is the cytoplasm. This is an uncharacterized protein from Bacillus subtilis (strain 168).